Here is a 175-residue protein sequence, read N- to C-terminus: UPF0398 protein SPH_0478 (175 aa).

The protein belongs to the UPF0398 family.

In Streptococcus pneumoniae (strain Hungary19A-6), this protein is UPF0398 protein SPH_0478.